We begin with the raw amino-acid sequence, 281 residues long: sn-glycerol-3-phosphate transport system permease protein UgpE (281 aa).

6 helical membrane passes run 16-36 (LILGIAVILFPLYVAFVAATL), 85-105 (FSITLGKITVSMLSAFAIVWF), 113-133 (FFWMIFITLMLPVEVRIFPTV), 142-162 (LDSYAGLTLPLMASATATFLF), 202-222 (ALFVITFIYGWNQYLWPLLII), and 247-267 (WNSVMAAMLLTLIPPVVIVLV). In terms of domain architecture, ABC transmembrane type-1 spans 77–268 (LLNSFVMAFS…IPPVVIVLVM (192 aa)).

The protein belongs to the binding-protein-dependent transport system permease family. UgpAE subfamily. In terms of assembly, the complex is composed of two ATP-binding proteins (UgpC), two transmembrane proteins (UgpA and UgpE) and a solute-binding protein (UgpB).

It localises to the cell inner membrane. Part of the ABC transporter complex UgpBAEC involved in sn-glycerol-3-phosphate (G3P) import. Probably responsible for the translocation of the substrate across the membrane. The chain is sn-glycerol-3-phosphate transport system permease protein UgpE (ugpE) from Escherichia coli O6:K15:H31 (strain 536 / UPEC).